Consider the following 136-residue polypeptide: Large ribosomal subunit protein uL16 (136 aa).

Belongs to the universal ribosomal protein uL16 family. Part of the 50S ribosomal subunit.

Functionally, binds 23S rRNA and is also seen to make contacts with the A and possibly P site tRNAs. This Pseudoalteromonas atlantica (strain T6c / ATCC BAA-1087) protein is Large ribosomal subunit protein uL16.